Reading from the N-terminus, the 87-residue chain is Small ribosomal subunit protein bS18 (87 aa).

Belongs to the bacterial ribosomal protein bS18 family. As to quaternary structure, part of the 30S ribosomal subunit. Forms a tight heterodimer with protein bS6.

In terms of biological role, binds as a heterodimer with protein bS6 to the central domain of the 16S rRNA, where it helps stabilize the platform of the 30S subunit. The protein is Small ribosomal subunit protein bS18 of Nitratidesulfovibrio vulgaris (strain ATCC 29579 / DSM 644 / CCUG 34227 / NCIMB 8303 / VKM B-1760 / Hildenborough) (Desulfovibrio vulgaris).